We begin with the raw amino-acid sequence, 97 residues long: UPF0235 protein Aasi_0294 (97 aa).

This sequence belongs to the UPF0235 family.

The chain is UPF0235 protein Aasi_0294 from Amoebophilus asiaticus (strain 5a2).